The following is a 462-amino-acid chain: Iroquois-class homeodomain protein irx-1-B (462 aa).

Residues 121–183 (DPGRPKNATR…NARRRLKKEN (63 aa)) constitute a DNA-binding region (homeobox; TALE-type). Disordered stretches follow at residues 191–302 (GKED…PHSK), 314–339 (SPDGALKSSPPPSQANHTSPQMQHPA), and 405–462 (SLSS…LPSA). Composition is skewed to acidic residues over residues 210-220 (EDDEEIDLESI) and 228-239 (NDGEQSNEEEDE). Residues 240 to 257 (KLDHFRHGEKVSLKKESE) show a composition bias toward basic and acidic residues. The span at 410-426 (RTPERTSPKHSDRENLP) shows a compositional bias: basic and acidic residues. Positions 446 to 455 (FSQQEGTSRI) are enriched in polar residues.

It belongs to the TALE/IRO homeobox family.

Its subcellular location is the nucleus. In terms of biological role, acts partially redundantly with other irx members in neural patterning. Required for formation of the posterior forebrain, midbrain, hindbrain, and to a lesser extent, spinal cord. Acts early in neural plate development to induce expression of some but not all proneural genes, and specify a neural precursor state. Also up-regulates repressors that prevent neuronal differentiation. Patterns the neuroectoderm in both the anterior/posterior and dorsal/ventral axes. Acts primarily as a transcriptional repressor during neural development, and binds to the bmp4 promoter to repress gene expression and thus mediate down-regulation of bmp4 by wnt signaling. Controls multiple processes through bmp4-repression including neural plate development, neural crest specification and Spemann organizer development. Involved in the specification of the preplacodal field at the anterior border of the neural plate. Regulates the genetic cascade of interactions that are necessary for positioning the isthmus organizer and the formation of the midbrain-hindbrain boundary. Required during at least two stages of pronephros kidney development; during neurula stages, maintains transcription of key renal genes to define the size and identity of the pronephric anlage, probably in part through regulation of bmp-signaling. Subsequently required for proper formation of the intermediate tubule segment of the pronephros. Acts principally as a transcriptional activator during pronephros development. This chain is Iroquois-class homeodomain protein irx-1-B (irx1-b), found in Xenopus laevis (African clawed frog).